We begin with the raw amino-acid sequence, 181 residues long: Large ribosomal subunit protein uL10 (181 aa).

This sequence belongs to the universal ribosomal protein uL10 family. Part of the ribosomal stalk of the 50S ribosomal subunit. The N-terminus interacts with L11 and the large rRNA to form the base of the stalk. The C-terminus forms an elongated spine to which L12 dimers bind in a sequential fashion forming a multimeric L10(L12)X complex.

Its function is as follows. Forms part of the ribosomal stalk, playing a central role in the interaction of the ribosome with GTP-bound translation factors. The chain is Large ribosomal subunit protein uL10 from Fervidobacterium nodosum (strain ATCC 35602 / DSM 5306 / Rt17-B1).